The sequence spans 86 residues: MSVDTQKVIEDNKRSAQDTGSPEVQVALLTARIELLTGHFKTHKKDHHSRRGLLQMVNRRRSLLDYLKKKDGERYKSLIEKLGLRR.

The segment at 1–22 is disordered; it reads MSVDTQKVIEDNKRSAQDTGSP. The segment covering 7–16 has biased composition (basic and acidic residues); it reads KVIEDNKRSA.

It belongs to the universal ribosomal protein uS15 family. As to quaternary structure, part of the 30S ribosomal subunit. Forms a bridge to the 50S subunit in the 70S ribosome, contacting the 23S rRNA.

Functionally, one of the primary rRNA binding proteins, it binds directly to 16S rRNA where it helps nucleate assembly of the platform of the 30S subunit by binding and bridging several RNA helices of the 16S rRNA. In terms of biological role, forms an intersubunit bridge (bridge B4) with the 23S rRNA of the 50S subunit in the ribosome. This Xanthomonas campestris pv. campestris (strain 8004) protein is Small ribosomal subunit protein uS15.